The following is a 207-amino-acid chain: ATP synthase subunit b 2 (207 aa).

The segment covering 1-31 has biased composition (low complexity); it reads MVAQAAPPAGTAGQGTHEAASAAHGAAAAHG. The disordered stretch occupies residues 1–41; sequence MVAQAAPPAGTAGQGTHEAASAAHGAAAAHGAAEEGHGKKS. Residues 48-70 form a helical membrane-spanning segment; that stretch reads ATTFASQLLWLVLSFGLLYLLMS.

Belongs to the ATPase B chain family. In terms of assembly, F-type ATPases have 2 components, F(1) - the catalytic core - and F(0) - the membrane proton channel. F(1) has five subunits: alpha(3), beta(3), gamma(1), delta(1), epsilon(1). F(0) has three main subunits: a(1), b(2) and c(10-14). The alpha and beta chains form an alternating ring which encloses part of the gamma chain. F(1) is attached to F(0) by a central stalk formed by the gamma and epsilon chains, while a peripheral stalk is formed by the delta and b chains.

Its subcellular location is the cell inner membrane. Functionally, f(1)F(0) ATP synthase produces ATP from ADP in the presence of a proton or sodium gradient. F-type ATPases consist of two structural domains, F(1) containing the extramembraneous catalytic core and F(0) containing the membrane proton channel, linked together by a central stalk and a peripheral stalk. During catalysis, ATP synthesis in the catalytic domain of F(1) is coupled via a rotary mechanism of the central stalk subunits to proton translocation. Component of the F(0) channel, it forms part of the peripheral stalk, linking F(1) to F(0). The protein is ATP synthase subunit b 2 of Xanthobacter autotrophicus (strain ATCC BAA-1158 / Py2).